Here is a 295-residue protein sequence, read N- to C-terminus: Pyridoxal 5'-phosphate synthase subunit PdxS (295 aa).

Asp25 contacts D-ribose 5-phosphate. The active-site Schiff-base intermediate with D-ribose 5-phosphate is Lys82. Gly154 provides a ligand contact to D-ribose 5-phosphate. Residue Arg166 coordinates D-glyceraldehyde 3-phosphate. Residues Gly215 and 236-237 contribute to the D-ribose 5-phosphate site; that span reads GS.

It belongs to the PdxS/SNZ family. In the presence of PdxT, forms a dodecamer of heterodimers.

The catalysed reaction is aldehydo-D-ribose 5-phosphate + D-glyceraldehyde 3-phosphate + L-glutamine = pyridoxal 5'-phosphate + L-glutamate + phosphate + 3 H2O + H(+). The protein operates within cofactor biosynthesis; pyridoxal 5'-phosphate biosynthesis. Catalyzes the formation of pyridoxal 5'-phosphate from ribose 5-phosphate (RBP), glyceraldehyde 3-phosphate (G3P) and ammonia. The ammonia is provided by the PdxT subunit. Can also use ribulose 5-phosphate and dihydroxyacetone phosphate as substrates, resulting from enzyme-catalyzed isomerization of RBP and G3P, respectively. The protein is Pyridoxal 5'-phosphate synthase subunit PdxS of Heliobacterium modesticaldum (strain ATCC 51547 / Ice1).